The primary structure comprises 261 residues: DNA-directed RNA polymerase subunit Rpo3 (261 aa).

This sequence belongs to the archaeal Rpo3/eukaryotic RPB3 RNA polymerase subunit family. As to quaternary structure, part of the RNA polymerase complex.

It localises to the cytoplasm. The catalysed reaction is RNA(n) + a ribonucleoside 5'-triphosphate = RNA(n+1) + diphosphate. In terms of biological role, DNA-dependent RNA polymerase (RNAP) catalyzes the transcription of DNA into RNA using the four ribonucleoside triphosphates as substrates. This is DNA-directed RNA polymerase subunit Rpo3 from Pyrococcus furiosus (strain ATCC 43587 / DSM 3638 / JCM 8422 / Vc1).